The following is a 565-amino-acid chain: Sulfite reductase [NADPH] hemoprotein beta-component (565 aa).

[4Fe-4S] cluster contacts are provided by Cys-429, Cys-435, Cys-474, and Cys-478. Siroheme is bound at residue Cys-478.

This sequence belongs to the nitrite and sulfite reductase 4Fe-4S domain family. As to quaternary structure, alpha(8)-beta(8). The alpha component is a flavoprotein, the beta component is a hemoprotein. Siroheme is required as a cofactor. The cofactor is [4Fe-4S] cluster.

The catalysed reaction is hydrogen sulfide + 3 NADP(+) + 3 H2O = sulfite + 3 NADPH + 4 H(+). It functions in the pathway sulfur metabolism; hydrogen sulfide biosynthesis; hydrogen sulfide from sulfite (NADPH route): step 1/1. In terms of biological role, component of the sulfite reductase complex that catalyzes the 6-electron reduction of sulfite to sulfide. This is one of several activities required for the biosynthesis of L-cysteine from sulfate. This chain is Sulfite reductase [NADPH] hemoprotein beta-component, found in Shewanella sp. (strain W3-18-1).